A 266-amino-acid chain; its full sequence is Glucosamine-6-phosphate deaminase (266 aa).

The active-site Proton acceptor; for enolization step is Asp72. Asp141 functions as the For ring-opening step in the catalytic mechanism. Residue His143 is the Proton acceptor; for ring-opening step of the active site. Glu148 acts as the For ring-opening step in catalysis.

This sequence belongs to the glucosamine/galactosamine-6-phosphate isomerase family. NagB subfamily. In terms of assembly, homohexamer; trimer of disulfide-linked dimers.

It carries out the reaction alpha-D-glucosamine 6-phosphate + H2O = beta-D-fructose 6-phosphate + NH4(+). Its pathway is amino-sugar metabolism; N-acetylneuraminate degradation; D-fructose 6-phosphate from N-acetylneuraminate: step 5/5. With respect to regulation, allosterically activated by N-acetylglucosamine 6-phosphate (GlcNAc6P). In terms of biological role, catalyzes the reversible isomerization-deamination of glucosamine 6-phosphate (GlcN6P) to form fructose 6-phosphate (Fru6P) and ammonium ion. This Vibrio parahaemolyticus serotype O3:K6 (strain RIMD 2210633) protein is Glucosamine-6-phosphate deaminase.